A 568-amino-acid chain; its full sequence is MTSFREFAETCQAIEKISSTIETTNKVADLLKKVDVEELPLATHFIMSEVFPAWSGEQLGIGTSLLYSSLSKASGMSVRSIESLIRTTGDIGETALLILKEKRKNQVTFSSFLEEQPELSITEVYQRFKTASEASGKGSQELKIKNLQFLFNSSTPREAKYISRLALEELRIGVGEGVVRDAIARAFSVPSDKVEHAFMVTNDLGIVAAAAKEGGIEALESLGIEINRPIKMMLSQISPDIDADIRDMKGAAIEWKFDGARVQIHKNGNSVTLFSRKLENVTNSLPDLVEIIRKHVKAESAILDGEAVAVDENGKPRAFQEILKRFRRKYDVEEKALGIPIQLNLFDIMYLNGRTLIDLPLVERRKALESCVESSVEDSKSISVDEQVITGDLELVEKIYREALNAGHEGVMVKNPNSAYSPGKRGKNWLKKKPLMETLDLVVVGAEWGYGRRANLIGSYSVACYDPETSRFLQVGKVGTGLTDEQLKELTEMLSGLMEGGEAGGVFAIRPKVVLEIAFEEIQKSPNYDSGFALRFPRFIRIRDDKDPEEADTIQRIGRVYSQQLKRL.

Position 254 (glutamate 254) interacts with ATP. Lysine 256 (N6-AMP-lysine intermediate) is an active-site residue. ATP-binding residues include arginine 261, arginine 276, glutamate 306, phenylalanine 346, arginine 425, and lysine 431.

The protein belongs to the ATP-dependent DNA ligase family. Requires Mg(2+) as cofactor.

It catalyses the reaction ATP + (deoxyribonucleotide)n-3'-hydroxyl + 5'-phospho-(deoxyribonucleotide)m = (deoxyribonucleotide)n+m + AMP + diphosphate.. DNA ligase that seals nicks in double-stranded DNA during DNA replication, DNA recombination and DNA repair. This Methanosarcina acetivorans (strain ATCC 35395 / DSM 2834 / JCM 12185 / C2A) protein is DNA ligase 2.